The sequence spans 114 residues: Fumarate reductase subunit D (114 aa).

3 consecutive transmembrane segments (helical) span residues 24–44 (VSAI…PFGL), 50–70 (LITF…TIFP), and 92–112 (GGFI…FAVI).

This sequence belongs to the FrdD family. In terms of assembly, part of an enzyme complex containing four subunits: a flavoprotein (FrdA), an iron-sulfur protein (FrdB), and two hydrophobic anchor proteins (FrdC and FrdD).

It localises to the cell inner membrane. Anchors the catalytic components of the fumarate reductase complex to the cell membrane, binds quinones. The protein is Fumarate reductase subunit D of Haemophilus influenzae (strain 86-028NP).